We begin with the raw amino-acid sequence, 128 residues long: Large ribosomal subunit protein uL18 (128 aa).

This sequence belongs to the universal ribosomal protein uL18 family. In terms of assembly, part of the 50S ribosomal subunit; part of the 5S rRNA/L5/L18/L25 subcomplex. Contacts the 5S and 23S rRNAs.

Functionally, this is one of the proteins that bind and probably mediate the attachment of the 5S RNA into the large ribosomal subunit, where it forms part of the central protuberance. The polypeptide is Large ribosomal subunit protein uL18 (Acidothermus cellulolyticus (strain ATCC 43068 / DSM 8971 / 11B)).